The sequence spans 251 residues: DNA repair protein RecO (251 aa).

This sequence belongs to the RecO family.

Involved in DNA repair and RecF pathway recombination. This is DNA repair protein RecO from Macrococcus caseolyticus (strain JCSC5402) (Macrococcoides caseolyticum).